A 1252-amino-acid chain; its full sequence is ATP-dependent helicase/nuclease subunit A (1252 aa).

Residues 6 to 489 (TNWTEEQKEA…VLLYKNFRSR (484 aa)) enclose the UvrD-like helicase ATP-binding domain. ATP is bound at residue 27 to 34 (AAAGSGKT). Residues 523–811 (ANYEEIEENL…RIMSIHKSKG (289 aa)) enclose the UvrD-like helicase C-terminal domain.

Belongs to the helicase family. AddA subfamily. Heterodimer of AddA and AddB/RexB. Mg(2+) is required as a cofactor.

It catalyses the reaction Couples ATP hydrolysis with the unwinding of duplex DNA by translocating in the 3'-5' direction.. The catalysed reaction is ATP + H2O = ADP + phosphate + H(+). The heterodimer acts as both an ATP-dependent DNA helicase and an ATP-dependent, dual-direction single-stranded exonuclease. Recognizes the chi site generating a DNA molecule suitable for the initiation of homologous recombination. The AddA nuclease domain is required for chi fragment generation; this subunit has the helicase and 3' -&gt; 5' nuclease activities. This Clostridium acetobutylicum (strain ATCC 824 / DSM 792 / JCM 1419 / IAM 19013 / LMG 5710 / NBRC 13948 / NRRL B-527 / VKM B-1787 / 2291 / W) protein is ATP-dependent helicase/nuclease subunit A.